We begin with the raw amino-acid sequence, 87 residues long: uncharacterized protein (87 aa).

The protein to bacteriophage lambda exonuclease exo.

This is an uncharacterized protein from Escherichia coli (strain K12).